Reading from the N-terminus, the 135-residue chain is UPF0738 protein Aflv_2116 (135 aa).

Belongs to the UPF0738 family.

This Anoxybacillus flavithermus (strain DSM 21510 / WK1) protein is UPF0738 protein Aflv_2116.